The sequence spans 233 residues: Endo-1,4-beta-xylanase 1 (233 aa).

Residues 1-20 form the signal peptide; that stretch reads MVSFTSIVTAVVALAGSALA. Asn27 carries an N-linked (GlcNAc...) asparagine glycan. The GH11 domain maps to 40 to 230; it reads QSTPSSTGRH…SAGNSNINVQ (191 aa). Glu126 functions as the Nucleophile in the catalytic mechanism. The active-site Proton donor is the Glu217.

Belongs to the glycosyl hydrolase 11 (cellulase G) family.

Its subcellular location is the secreted. It carries out the reaction Endohydrolysis of (1-&gt;4)-beta-D-xylosidic linkages in xylans.. It participates in glycan degradation; xylan degradation. Functionally, endo-1,4-beta-xylanase involved in the hydrolysis of xylan, a major structural heterogeneous polysaccharide found in plant biomass representing the second most abundant polysaccharide in the biosphere, after cellulose. Accounts for approximately 70 percent of the endoxylanase activity in the culture filtrate. This chain is Endo-1,4-beta-xylanase 1 (XYL1), found in Pyricularia grisea (Crabgrass-specific blast fungus).